Reading from the N-terminus, the 624-residue chain is Probable potassium transport system protein Kup 1 (624 aa).

The next 12 helical transmembrane spans lie at 10–30, 48–68, 94–114, 133–153, 159–179, 210–230, 242–262, 270–290, 331–351, 363–383, 388–408, and 413–433; these read LALG…LYAL, LSLI…MIIF, PLFY…GMLT, LYPY…SLQA, IGYL…ILGI, LLLG…ADIG, FFAA…NLIV, PFFM…ATVA, IYVP…CLAF, IAVN…AISI, IFNV…FLGA, and FITG…IMYS.

It belongs to the HAK/KUP transporter (TC 2.A.72) family.

The protein resides in the cell inner membrane. It carries out the reaction K(+)(in) + H(+)(in) = K(+)(out) + H(+)(out). Transport of potassium into the cell. Likely operates as a K(+):H(+) symporter. In Legionella pneumophila (strain Lens), this protein is Probable potassium transport system protein Kup 1.